The following is a 516-amino-acid chain: Gastrula zinc finger protein XlCGF53.1 (516 aa).

Disordered regions lie at residues 1 to 33 (MGMWEEASDTGMKGKKKKKDKNEEEEEERGKKE) and 200 to 220 (GNQSDCSINPLTEQIQGTDKP). The segment covering 200–218 (GNQSDCSINPLTEQIQGTD) has biased composition (polar residues). C2H2-type zinc fingers lie at residues 312–334 (YICSECQKHFSTKAGLARHQKTH), 354–376 (FPCSECGKRFARRQHLTDHQSSH), 382–404 (YACSQCEKYFPHRSNLNRHLKLH), 410–432 (FPCSQCGKRFPCVSDLNIHRRVH), 438–460 (YSCSECGKCFKHHSNLTNHQRTH), 466–488 (FSCTECGKGFKDRSSLTVHHRTH), and 494–516 (FSCTECGKGFKDRSSLTVHHRTH).

Belongs to the krueppel C2H2-type zinc-finger protein family.

The protein resides in the nucleus. May be involved in transcriptional regulation. This is Gastrula zinc finger protein XlCGF53.1 from Xenopus laevis (African clawed frog).